A 397-amino-acid chain; its full sequence is Gamma tubulin complex adapter mto2 (397 aa).

The span at 1-13 shows a compositional bias: basic and acidic residues; it reads MSEHNYQSDREVA. Disordered stretches follow at residues 1–44, 269–298, and 346–397; these read MSEH…WRAG, YTSS…PFPS, and RSDP…TPSP. 4 stretches are compositionally biased toward polar residues: residues 22 to 37, 269 to 281, 352 to 369, and 382 to 397; these read ASAN…STPR, YTSS…QRMA, RHVS…SPTS, and SPAS…TPSP. Phosphoserine is present on residues Ser-366 and Ser-396.

Interacts with mto1; the interaction is direct and required for efficient binding to the gamma-tubulin complex. Interacts with gamma tubulin complex subunits alp4, alp6 and gtb1.

It localises to the cytoplasm. It is found in the cytoskeleton. Its subcellular location is the microtubule organizing center. The protein resides in the spindle pole body. Functionally, acts together with mto1 to promote nucleation of at least a subset of cytoplasmic microtubules, by recruiting the gamma-tubulin complex to the interphase microtubule organizing center (iMTOC) and to the equatorial MTOC (eMTOC) during anaphase. Does not appear to be required for cytoplasmic astral microtubule nucleation from the spindle pole body (SPB). Required to establish the eMTOC, and thereby to tether the cytokinetic actin ring. The protein is Gamma tubulin complex adapter mto2 of Schizosaccharomyces pombe (strain 972 / ATCC 24843) (Fission yeast).